The sequence spans 204 residues: Glycerol-3-phosphate acyltransferase (204 aa).

5 helical membrane-spanning segments follow: residues 6 to 26, 80 to 100, 122 to 142, 144 to 164, and 168 to 188; these read YIII…YIVA, LVGI…VAGH, LAVN…VVAI, KYVS…MIMV, and AGLI…RANI.

This sequence belongs to the PlsY family. As to quaternary structure, probably interacts with PlsX.

The protein resides in the cell membrane. The catalysed reaction is an acyl phosphate + sn-glycerol 3-phosphate = a 1-acyl-sn-glycero-3-phosphate + phosphate. It functions in the pathway lipid metabolism; phospholipid metabolism. In terms of biological role, catalyzes the transfer of an acyl group from acyl-phosphate (acyl-PO(4)) to glycerol-3-phosphate (G3P) to form lysophosphatidic acid (LPA). This enzyme utilizes acyl-phosphate as fatty acyl donor, but not acyl-CoA or acyl-ACP. The polypeptide is Glycerol-3-phosphate acyltransferase (Clostridioides difficile (strain 630) (Peptoclostridium difficile)).